The primary structure comprises 154 residues: Ribonuclease H (154 aa).

Positions 1-141 (MKRIEAYTDG…ADELAREGME (141 aa)) constitute an RNase H type-1 domain. Positions 9, 47, 69, and 133 each coordinate Mg(2+).

It belongs to the RNase H family. In terms of assembly, monomer. The cofactor is Mg(2+).

It localises to the cytoplasm. It catalyses the reaction Endonucleolytic cleavage to 5'-phosphomonoester.. Endonuclease that specifically degrades the RNA of RNA-DNA hybrids. This chain is Ribonuclease H, found in Brucella anthropi (strain ATCC 49188 / DSM 6882 / CCUG 24695 / JCM 21032 / LMG 3331 / NBRC 15819 / NCTC 12168 / Alc 37) (Ochrobactrum anthropi).